The chain runs to 361 residues: Phospho-N-acetylmuramoyl-pentapeptide-transferase (361 aa).

The next 10 helical transmembrane spans lie at 28 to 48, 74 to 94, 99 to 119, 133 to 153, 168 to 188, 203 to 223, 236 to 256, 263 to 283, 288 to 308, and 338 to 358; these read LAII…IKFL, TMGG…LADL, IWIT…DDYA, SKLL…EYLD, LSLD…VGSS, VPIA…GNLI, TGEL…FLWF, VFMG…ISVI, IVLA…ILQV, and KVVI…LSSL.

This sequence belongs to the glycosyltransferase 4 family. MraY subfamily. Mg(2+) is required as a cofactor.

The protein localises to the cell inner membrane. The catalysed reaction is UDP-N-acetyl-alpha-D-muramoyl-L-alanyl-gamma-D-glutamyl-meso-2,6-diaminopimeloyl-D-alanyl-D-alanine + di-trans,octa-cis-undecaprenyl phosphate = di-trans,octa-cis-undecaprenyl diphospho-N-acetyl-alpha-D-muramoyl-L-alanyl-D-glutamyl-meso-2,6-diaminopimeloyl-D-alanyl-D-alanine + UMP. It participates in cell wall biogenesis; peptidoglycan biosynthesis. In terms of biological role, catalyzes the initial step of the lipid cycle reactions in the biosynthesis of the cell wall peptidoglycan: transfers peptidoglycan precursor phospho-MurNAc-pentapeptide from UDP-MurNAc-pentapeptide onto the lipid carrier undecaprenyl phosphate, yielding undecaprenyl-pyrophosphoryl-MurNAc-pentapeptide, known as lipid I. This chain is Phospho-N-acetylmuramoyl-pentapeptide-transferase, found in Rickettsia felis (strain ATCC VR-1525 / URRWXCal2) (Rickettsia azadi).